The chain runs to 265 residues: MPAAIRPMKKTVSFSKDVSNNNNNLESDSDTKQSPQSYLTFIPQIKNSLLVVPFHNIFILVGMFYSGLTQDLETVMWKGFLTSIPIQVIYNYIIYINLLPLKKSTRNDHQNNSSGSAINNNNNNNNNNVPLLIGSSIFVSIVLSLPLFVVIILMGAPVYKYSLKTLYLSLHLSQLIFNPLIILSNLNVNKIKRLFKQDHLYRIIFHHGILSSVLLTLGGCWLGVIPIPLDWDRPWQQWPITLLVGGYLGGVVGGVLSLIVNYFSH.

The next 2 membrane-spanning stretches (helical) occupy residues 49 to 69 and 79 to 99; these read LLVVPFHNIFILVGMFYSGLT and GFLTSIPIQVIYNYIIYINLL. N-linked (GlcNAc...) asparagine glycans are attached at residues asparagine 111 and asparagine 112. Transmembrane regions (helical) follow at residues 137-157, 166-186, 209-229, and 240-260; these read IFVSIVLSLPLFVVIILMGAP, LYLSLHLSQLIFNPLIILSNL, ILSSVLLTLGGCWLGVIPIPL, and ITLLVGGYLGGVVGGVLSLIV.

Belongs to the PIGF family.

It is found in the endoplasmic reticulum membrane. It participates in glycolipid biosynthesis; glycosylphosphatidylinositol-anchor biosynthesis. Acts in the GPI biosynthetic pathway between GlcNAc-PI synthesis and GPI transfer to protein. The sequence is that of Glycosylphosphatidylinositol anchor biosynthesis protein 11 (GPI11) from Candida albicans (strain SC5314 / ATCC MYA-2876) (Yeast).